The chain runs to 665 residues: Dual specificity protein phosphatase 16 (665 aa).

Residues 22 to 137 form the Rhodanese domain; sequence GTEKVLLIDS…FSRCFPGLCE (116 aa). Lys55 is modified ((Microbial infection) N6-acetyllysine; by EIS). The region spanning 158–300 is the Tyrosine-protein phosphatase domain; that stretch reads GPTRILPNLY…LLDYEKKIKN (143 aa). Residue Cys244 is the Phosphocysteine intermediate of the active site. Residues 321–368 form a disordered region; the sequence is EPVPAVSEGGQKSETPLSPPCADSATSEAAGQRPVHPASVPSVPSVQP. Positions 354–368 are enriched in low complexity; it reads PVHPASVPSVPSVQP. Residue Ser446 is modified to Phosphoserine; by MAPK1. Composition is skewed to polar residues over residues 449–458 and 487–499; these read QELSEQTPET and VRTS…QRSL. 2 disordered regions span residues 449–505 and 597–665; these read QELS…PLHR and VRRR…IEVS. The residue at position 501 (Ser501) is a Phosphoserine. Residues 602 to 622 are compositionally biased toward basic and acidic residues; that stretch reads KPSDRADSRRSWHEESPFEKQ.

It belongs to the protein-tyrosine phosphatase family. Non-receptor class dual specificity subfamily. Interacts with ARRB2. Phosphorylated at Ser-446 by MAPK1/ERK2, which prevents its degradation, and thereby stabilizes it and blocks JNK MAPK activity. In terms of processing, (Microbial infection) Acetylated at Lys-55 by the M.tuberculosis Eis protein; this leads to the inhibition of JNK-dependent autophagy, phagosome maturation, and ROS (reactive oxygen species) generation for enhanced intracellular survival of M.tuberculosis.

The protein resides in the cytoplasm. The protein localises to the nucleus. It is found in the cytoplasmic vesicle. The enzyme catalyses O-phospho-L-tyrosyl-[protein] + H2O = L-tyrosyl-[protein] + phosphate. It carries out the reaction O-phospho-L-seryl-[protein] + H2O = L-seryl-[protein] + phosphate. It catalyses the reaction O-phospho-L-threonyl-[protein] + H2O = L-threonyl-[protein] + phosphate. Its function is as follows. Dual specificity protein phosphatase involved in the inactivation of MAP kinases. Dephosphorylates MAPK10 bound to ARRB2. In Homo sapiens (Human), this protein is Dual specificity protein phosphatase 16 (DUSP16).